We begin with the raw amino-acid sequence, 747 residues long: AMP deaminase 1 (747 aa).

Threonine 81 is subject to Phosphothreonine. Serine 85 carries the post-translational modification Phosphoserine. Phosphotyrosine is present on tyrosine 216. Residues histidine 303 and histidine 305 each coordinate Zn(2+). Residues histidine 305 and 374–379 (KFNDKY) contribute to the substrate site. Serine 441 bears the Phosphoserine mark. Position 572 (histidine 572) interacts with Zn(2+). Glutamate 575 contacts substrate. Histidine 594 serves as the catalytic Proton acceptor. Aspartate 649 contacts Zn(2+). 650–653 (DPMQ) is a substrate binding site.

This sequence belongs to the metallo-dependent hydrolases superfamily. Adenosine and AMP deaminases family. In terms of assembly, homotetramer. The cofactor is Zn(2+).

The enzyme catalyses AMP + H2O + H(+) = IMP + NH4(+). Its pathway is purine metabolism; IMP biosynthesis via salvage pathway; IMP from AMP: step 1/1. Its function is as follows. AMP deaminase plays a critical role in energy metabolism. This chain is AMP deaminase 1, found in Rattus norvegicus (Rat).